Reading from the N-terminus, the 614-residue chain is GPI transamidase component GAA1 (614 aa).

Residues 1–19 (MALLEKLHRRIVDMGLVPR) are Cytoplasmic-facing. The chain crosses the membrane as a helical span at residues 20-40 (IIALLPVISMLCALFGFISIA). The Lumenal portion of the chain corresponds to 41 to 356 (ILPMDGQYRR…APRQFVSISS (316 aa)). The N-linked (GlcNAc...) asparagine glycan is linked to asparagine 87. Residues 357-377 (YLPSAVALSIAFAISSLNAFI) form a helical membrane-spanning segment. Topologically, residues 378-394 (NNAYANISLFSEYNLVA) are cytoplasmic. A helical transmembrane segment spans residues 395-415 (LLVWFVSLVISFVVSQAFLLI). Residues 416–464 (PSSGLLMTISMASCFLPLILSRKIHISEPLSYRLKNVAFLYFSLVSTSL) are Lumenal-facing. The chain crosses the membrane as a helical span at residues 465-485 (LMINFAMALLIGTLAFPMTFV). Residues 486–535 (KTIVESSSEHEVTTQSSNPIKTEPKDEIELVENHMDTTPATPQQQKQKLK) lie on the Cytoplasmic side of the membrane. Residues 536–556 (NLVLLILTNPFISITLFGLFF) form a helical membrane-spanning segment. The Lumenal segment spans residues 557–577 (DDEFHGFDIINKLVSAWLDLK). A helical transmembrane segment spans residues 578–598 (CWSWFVLCIGWLPCWLLILAS). Over 599 to 614 (SFESKSVVVRSKEKQS) the chain is Cytoplasmic. The Prevents secretion from ER motif lies at 610 to 614 (KEKQS).

Forms a complex with CDC91, GPI17, GPI16 and GPI8.

It localises to the endoplasmic reticulum membrane. Its pathway is glycolipid biosynthesis; glycosylphosphatidylinositol-anchor biosynthesis. In terms of biological role, component of the GPI transamidase complex. Required for a terminal step of GPI anchor attachment onto proteins. Affects endocytosis. The protein is GPI transamidase component GAA1 (GAA1) of Saccharomyces cerevisiae (strain ATCC 204508 / S288c) (Baker's yeast).